We begin with the raw amino-acid sequence, 104 residues long: Type VII secretion system extracellular protein B (104 aa).

It belongs to the WXG100 family. As to quaternary structure, homodimer. When mixed with EsxA does not form heterodimers. Forms heterodimers with EsxD.

The protein localises to the secreted. Its function is as follows. Virulence factor that is important for the establishment of infection in the host. EsxB is required for EsxA synthesis as well as secretion. Mediates together with EsxA the release of S.aureus from the host cell. Also inhibits host cytokine production and thus modulates dendritic cell-mediated immunity. This is Type VII secretion system extracellular protein B from Staphylococcus aureus (strain USA300).